A 209-amino-acid chain; its full sequence is HTLV-1 basic zipper factor (209 aa).

Residues 41–165 form a disordered region; that stretch reads EEEETVLDGL…KEKMQELGVD (125 aa). 2 stretches are compositionally biased toward basic and acidic residues: residues 72–87 and 94–160; these read PRGETHRDRQRRAEEK and REKE…EKMQ. Short sequence motifs (nuclear localization signal) lie at residues 87–92, 116–120, and 137–141; these read KRKRKK, RRKRA, and RRERK.

Belongs to the HTLV-1 HBZ protein family. Interacts with host ATF4; this interaction inhibits viral RNA transcriptional activation by preventing ATF4 binding to Tax-responsive elements. Interacts with host CREB1; this interaction inhibits host CREB1 transcriptional activity. Interacts with host JUN, JUNB and JUND. Interacts with host EP300 and CREBBP; these interactions inhibit the association of the coactivators with the viral promoter. Interacts with host UBR5; this interaction regulates HBZ protein stability. Interacts with XRCC5 and XRCC6. Interacts with IRF7 and IKBKE; this interaction modulates host interferon signaling. Post-translationally, ubiquitinated by host E3 ligase UBR5 leading to HBZ degradation.

It is found in the host nucleus. In terms of biological role, enhances viral infectivity and persistence, and facilitates proliferation of HTLV-1-infected lymphocytes. Mechanistically, inhibits Tax-mediated viral replication and NF-kappa-B activation. Plays a role in allowing infected T-cells to escape the cytotoxic T-lymphocyte response by maintaining low levels of viral protein production. Also inhibits host EP300 histone acetyltransferase (HAT) activity, reducing levels of acetylated histone H3 at 'Lys-18' (H3K18ac) in infected cells. Contributes to the accumulation of chromosomal abnormalities by inhibiting double-stranded DNA breaks (DSB) repair through the NHEJ pathway. Participates in the modulation of host immune response at multiple levels contributing to abnormal interferon signaling and viral pathogenesis. This Human T-cell leukemia virus 1 (isolate Caribbea HS-35 subtype A) (HTLV-1) protein is HTLV-1 basic zipper factor (HBZ).